A 239-amino-acid chain; its full sequence is Transcriptional regulatory protein DcuR (239 aa).

The Response regulatory domain occupies 3 to 121 (NVLIIDDDAM…RFEEALTGWR (119 aa)). Aspartate 56 is modified (4-aspartylphosphate). The H-T-H motif DNA-binding region spans 181-200 (TDELANEVNISRVSCRKYLI).

In terms of processing, phosphorylated and activated by DcuS.

It is found in the cytoplasm. In terms of biological role, member of the two-component regulatory system DcuR/DcuS. Involved in the C4-dicarboxylate-stimulated regulation of the genes encoding the anaerobic fumarate respiratory system (frdABCD; nuoAN; dcuB; dcuC; sdhCDAB; etc.). Weakly regulates the aerobic C4-dicarboxylate transporter dctA. This is Transcriptional regulatory protein DcuR (dcuR) from Escherichia coli O157:H7.